Here is a 260-residue protein sequence, read N- to C-terminus: HTH-type transcriptional repressor NanR (260 aa).

The interval 1 to 21 (MSAFDHSSDDTQETIGNSLRR) is disordered. Positions 27 to 95 (KKLSEMVEEE…NGERARVSRP (69 aa)) constitute an HTH gntR-type domain. The H-T-H motif DNA-binding region spans 55 to 74 (ERELMAFFNVGRPSVREALA).

The protein belongs to the NanR family.

Its function is as follows. Transcriptional repressor that controls expression of the genes required for the catabolism of sialic acids. This Klebsiella aerogenes (strain ATCC 13048 / DSM 30053 / CCUG 1429 / JCM 1235 / KCTC 2190 / NBRC 13534 / NCIMB 10102 / NCTC 10006 / CDC 819-56) (Enterobacter aerogenes) protein is HTH-type transcriptional repressor NanR.